The primary structure comprises 403 residues: Histidine--tRNA ligase (403 aa).

It belongs to the class-II aminoacyl-tRNA synthetase family. Homodimer.

Its subcellular location is the cytoplasm. It catalyses the reaction tRNA(His) + L-histidine + ATP = L-histidyl-tRNA(His) + AMP + diphosphate + H(+). This is Histidine--tRNA ligase (hisS) from Aquifex aeolicus (strain VF5).